The following is a 359-amino-acid chain: ATP synthase subunit gamma, chloroplastic (359 aa).

The N-terminal 35 residues, 1–35 (MSCSHLSTAWSSSALASSASTTRRRSPPRSGLLVR), are a transit peptide targeting the chloroplast. The active site involves C124. C234 and C240 form a disulfide bridge.

It belongs to the ATPase gamma chain family. In terms of assembly, F-type ATPases have 2 components, CF(1) - the catalytic core - and CF(0) - the membrane proton channel. CF(1) has five subunits: alpha(3), beta(3), gamma(1), delta(1), epsilon(1). CF(0) has four main subunits: a, b, b' and c.

The protein resides in the plastid. The protein localises to the chloroplast thylakoid membrane. Its function is as follows. Produces ATP from ADP in the presence of a proton gradient across the membrane. The gamma chain is believed to be important in regulating ATPase activity and the flow of protons through the CF(0) complex. Inceptin is a proteolytic fragment produced by insect larvae that previously ingested the protein. This peptide mediate plant perception of herbivory through the induction of volatile, phenylpropanoid and protease inhibitor defenses such as ethylene, jasmonic acid and salicylic acid for example. The sequence is that of ATP synthase subunit gamma, chloroplastic from Zea mays (Maize).